The following is a 319-amino-acid chain: Transcription initiation factor IIB 6 (319 aa).

A compositionally biased stretch (basic and acidic residues) spans 1 to 16; sequence MTDARMRSREQERTDE. The segment at 1-33 is disordered; sequence MTDARMRSREQERTDETESESTDGCPECGGLVV. The TFIIB-type zinc finger occupies 21–51; the sequence is STDGCPECGGLVVNDEEHGESVCADCGLVVE. The Zn(2+) site is built by cysteine 25, cysteine 28, cysteine 43, and cysteine 46. Positions 59 to 74 are enriched in basic and acidic residues; sequence PEWRAFDSKEKDEKSR. The segment at 59–89 is disordered; it reads PEWRAFDSKEKDEKSRVGAPTTNTMHDKGLS. 2 consecutive repeat copies span residues 137-220 and 231-312.

It belongs to the TFIIB family.

In terms of biological role, stabilizes TBP binding to an archaeal box-A promoter. Also responsible for recruiting RNA polymerase II to the pre-initiation complex (DNA-TBP-TFIIB). The chain is Transcription initiation factor IIB 6 from Halobacterium salinarum (strain ATCC 700922 / JCM 11081 / NRC-1) (Halobacterium halobium).